Consider the following 403-residue polypeptide: F-box only protein 22 (403 aa).

An N-acetylmethionine modification is found at Met-1. The F-box domain occupies 19–71; sequence STFVLSNLAEVVERVLTFLPAKALLRVACVCRLWRECVRRVLRTHRSVTWISA. The residue at position 128 (Ser-128) is a Phosphoserine. At Lys-194 the chain carries N6-acetyllysine.

Directly interacts with SKP1 and CUL1.

The protein localises to the cytoplasm. It localises to the myofibril. It is found in the sarcomere. The protein resides in the z line. Its function is as follows. Substrate-recognition component of the SCF (SKP1-CUL1-F-box protein)-type E3 ubiquitin ligase complex. Promotes the proteasome-dependent degradation of key sarcomeric proteins, such as alpha-actinin (ACTN2) and filamin-C (FLNC), essential for maintenance of normal contractile function. The polypeptide is F-box only protein 22 (FBXO22) (Pongo abelii (Sumatran orangutan)).